We begin with the raw amino-acid sequence, 131 residues long: uncharacterized protein (131 aa).

An N-terminal signal peptide occupies residues 1-26; the sequence is MKKIVAAIVVIGLVFIAFFYLYSRSG.

This is an uncharacterized protein from Bacillus subtilis (strain 168).